A 216-amino-acid polypeptide reads, in one-letter code: ATP-dependent Clp protease proteolytic subunit (216 aa).

Residue S101 is the Nucleophile of the active site. The active site involves H126.

Belongs to the peptidase S14 family. In terms of assembly, component of the chloroplastic Clp protease core complex.

It localises to the plastid. It is found in the chloroplast stroma. It carries out the reaction Hydrolysis of proteins to small peptides in the presence of ATP and magnesium. alpha-casein is the usual test substrate. In the absence of ATP, only oligopeptides shorter than five residues are hydrolyzed (such as succinyl-Leu-Tyr-|-NHMec, and Leu-Tyr-Leu-|-Tyr-Trp, in which cleavage of the -Tyr-|-Leu- and -Tyr-|-Trp bonds also occurs).. In terms of biological role, cleaves peptides in various proteins in a process that requires ATP hydrolysis. Has a chymotrypsin-like activity. Plays a major role in the degradation of misfolded proteins. This is ATP-dependent Clp protease proteolytic subunit from Saccharum hybrid (Sugarcane).